A 248-amino-acid polypeptide reads, in one-letter code: Tyrosine recombinase XerD-like (248 aa).

Positions 1–72 (MKSYIEPFIA…TANQFLYYLY (72 aa)) constitute a Core-binding (CB) domain. The 164-residue stretch at 85–248 (DTMKVMRTEK…PVTLEKYYKS (164 aa)) folds into the Tyr recombinase domain. Residues Lys-149 and Arg-213 contribute to the active site. Tyr-245 (O-(3'-phospho-DNA)-tyrosine intermediate) is an active-site residue.

It belongs to the 'phage' integrase family. XerD-like subfamily.

The protein resides in the cytoplasm. Functionally, putative tyrosine recombinase. Not involved in the cutting and rejoining of the recombining DNA molecules on dif(SL) site. The protein is Tyrosine recombinase XerD-like of Streptococcus pyogenes serotype M6 (strain ATCC BAA-946 / MGAS10394).